We begin with the raw amino-acid sequence, 252 residues long: 2-succinyl-6-hydroxy-2,4-cyclohexadiene-1-carboxylate synthase (252 aa).

It belongs to the AB hydrolase superfamily. MenH family. In terms of assembly, monomer.

It catalyses the reaction 5-enolpyruvoyl-6-hydroxy-2-succinyl-cyclohex-3-ene-1-carboxylate = (1R,6R)-6-hydroxy-2-succinyl-cyclohexa-2,4-diene-1-carboxylate + pyruvate. The protein operates within quinol/quinone metabolism; 1,4-dihydroxy-2-naphthoate biosynthesis; 1,4-dihydroxy-2-naphthoate from chorismate: step 3/7. It functions in the pathway quinol/quinone metabolism; menaquinone biosynthesis. Functionally, catalyzes a proton abstraction reaction that results in 2,5-elimination of pyruvate from 2-succinyl-5-enolpyruvyl-6-hydroxy-3-cyclohexene-1-carboxylate (SEPHCHC) and the formation of 2-succinyl-6-hydroxy-2,4-cyclohexadiene-1-carboxylate (SHCHC). This is 2-succinyl-6-hydroxy-2,4-cyclohexadiene-1-carboxylate synthase from Escherichia coli O17:K52:H18 (strain UMN026 / ExPEC).